A 68-amino-acid polypeptide reads, in one-letter code: Large ribosomal subunit protein bL31 (68 aa).

Residues Cys16, Cys18, Cys36, and Cys39 each coordinate Zn(2+).

Belongs to the bacterial ribosomal protein bL31 family. Type A subfamily. In terms of assembly, part of the 50S ribosomal subunit. The cofactor is Zn(2+).

Its function is as follows. Binds the 23S rRNA. The chain is Large ribosomal subunit protein bL31 from Dictyoglomus thermophilum (strain ATCC 35947 / DSM 3960 / H-6-12).